We begin with the raw amino-acid sequence, 413 residues long: Cardiolipin synthase B (413 aa).

2 consecutive PLD phosphodiesterase domains span residues 108–135 (VFRR…SAEH) and 285–312 (RRRP…DPLS). Residues H113, K115, D120, H290, K292, and D297 contribute to the active site. The tract at residues 390-413 (VGPPAQPTMETQDRVETENTGVKP) is disordered.

Belongs to the phospholipase D family. Cardiolipin synthase subfamily. ClsB sub-subfamily.

The protein resides in the cell membrane. It carries out the reaction 2 a 1,2-diacyl-sn-glycero-3-phospho-(1'-sn-glycerol) = a cardiolipin + glycerol. Its function is as follows. Catalyzes the phosphatidyl group transfer from one phosphatidylglycerol molecule to another to form cardiolipin (CL) (diphosphatidylglycerol) and glycerol. The protein is Cardiolipin synthase B of Escherichia coli O6:H1 (strain CFT073 / ATCC 700928 / UPEC).